A 557-amino-acid polypeptide reads, in one-letter code: uncharacterized protein (557 aa).

Residues 1-30 (MAPRRRRHTRIAGLRVVGTATLVAATTLTA) form the signal peptide. Cys-31 is lipidated: N-palmitoyl cysteine. Residue Cys-31 is the site of S-diacylglycerol cysteine attachment.

This sequence to M.bovis Mb2616c and M.leprae ML0489.

It is found in the cell membrane. This is an uncharacterized protein from Mycobacterium tuberculosis (strain ATCC 25618 / H37Rv).